Here is a 267-residue protein sequence, read N- to C-terminus: Undecaprenyl-diphosphatase (267 aa).

7 helical membrane-spanning segments follow: residues 1-21 (MTLF…FLPV), 49-69 (VGTL…AVAG), 83-103 (AFLA…GLAL), 111-131 (ALRS…VLYW), 190-210 (MLMS…EVAA), 219-239 (DAAI…TLMM), and 245-265 (VSFT…LIIA).

This sequence belongs to the UppP family.

It is found in the cell inner membrane. The enzyme catalyses di-trans,octa-cis-undecaprenyl diphosphate + H2O = di-trans,octa-cis-undecaprenyl phosphate + phosphate + H(+). In terms of biological role, catalyzes the dephosphorylation of undecaprenyl diphosphate (UPP). Confers resistance to bacitracin. The sequence is that of Undecaprenyl-diphosphatase from Dinoroseobacter shibae (strain DSM 16493 / NCIMB 14021 / DFL 12).